A 289-amino-acid polypeptide reads, in one-letter code: Acetyl-coenzyme A carboxylase carboxyl transferase subunit beta (289 aa).

The CoA carboxyltransferase N-terminal domain occupies 28–289 (LWSKCPSCEA…ALLQKLPAAA (262 aa)). Zn(2+)-binding residues include Cys-32, Cys-35, Cys-51, and Cys-54. The C4-type zinc-finger motif lies at 32 to 54 (CPSCEAVLYATDLENNLQVCPKC).

This sequence belongs to the AccD/PCCB family. As to quaternary structure, acetyl-CoA carboxylase is a heterohexamer composed of biotin carboxyl carrier protein (AccB), biotin carboxylase (AccC) and two subunits each of ACCase subunit alpha (AccA) and ACCase subunit beta (AccD). Zn(2+) serves as cofactor.

Its subcellular location is the cytoplasm. It carries out the reaction N(6)-carboxybiotinyl-L-lysyl-[protein] + acetyl-CoA = N(6)-biotinyl-L-lysyl-[protein] + malonyl-CoA. The protein operates within lipid metabolism; malonyl-CoA biosynthesis; malonyl-CoA from acetyl-CoA: step 1/1. In terms of biological role, component of the acetyl coenzyme A carboxylase (ACC) complex. Biotin carboxylase (BC) catalyzes the carboxylation of biotin on its carrier protein (BCCP) and then the CO(2) group is transferred by the transcarboxylase to acetyl-CoA to form malonyl-CoA. The chain is Acetyl-coenzyme A carboxylase carboxyl transferase subunit beta from Dechloromonas aromatica (strain RCB).